The following is a 686-amino-acid chain: Protein-glutamine gamma-glutamyltransferase 2 (686 aa).

Ala2 is modified (N-acetylalanine). 2 cysteine pairs are disulfide-bonded: Cys230/Cys370 and Cys370/Cys371. Active-site residues include Cys277, His335, and Asp358. Ca(2+) contacts are provided by Asn398, Asp400, Glu437, Glu447, and Glu452. Position 468 is an N6-acetyllysine (Lys468). Residue 476–483 coordinates GTP; it reads RIRVGDSM. Glu538 provides a ligand contact to Ca(2+). Residue 579–582 coordinates GTP; sequence RDLY. Residue Gln632 forms an Isoglutamyl lysine isopeptide (Gln-Lys) (interchain with K-?) linkage.

Belongs to the transglutaminase superfamily. Transglutaminase family. In terms of assembly, monomer. Interacts with phospholipase C; promoting alpha-1 adrenergic receptor signaling. Interacts with PLCD1. Ca(2+) serves as cofactor. Post-translationally, disulfide bond formation inactivates the calcium-dependent acyltransferase activity. Cys-370 can form disulfide bonds with both Cys-230 and Cys-371: formation of a disulfide bond between Cys-230 and Cys-370 facilitates formation of the disulfide between Cys-370 and Cys-371, which promotes inactivation of the acyltransferase activity. May also form interchain disulfids between Cys-230 and Cys-370. Ca(2+) protects against disulfide bond formation and inactivation. Auto-transglutaminated: Forms covalent cross-links mediated by transglutaminase between Gln-632 and the epsilon-amino group of a lysine residue of itself or HMGB1, forming homopolymers and heteropolymers, respectively. In terms of processing, S-nitrosylated, leading to inactivation of the acyltransferase activity.

The protein localises to the cytoplasm. It is found in the cytosol. It localises to the nucleus. The protein resides in the chromosome. Its subcellular location is the secreted. The protein localises to the extracellular space. It is found in the extracellular matrix. It localises to the cell membrane. The protein resides in the mitochondrion. The enzyme catalyses L-glutaminyl-[protein] + L-lysyl-[protein] = [protein]-L-lysyl-N(6)-5-L-glutamyl-[protein] + NH4(+). It catalyses the reaction L-glutaminyl-[protein] + serotonin = 5-serotonyl-L-glutamyl-[protein] + NH4(+). The catalysed reaction is L-glutaminyl-[protein] + dopamine = 5-dopaminyl-L-glutamyl-[protein] + NH4(+). It carries out the reaction L-glutaminyl-[protein] + histamine = 5-histaminyl-L-glutamyl-[protein] + NH4(+). The enzyme catalyses L-glutaminyl-[protein] + (R)-noradrenaline = 5-(R)-noradrenalinyl-L-glutamyl-[protein] + NH4(+). It catalyses the reaction L-glutaminyl-[protein] + H2O = L-glutamyl-[protein] + NH4(+). Its activity is regulated as follows. Acyltransferase activity is regulated by the binding of GTP and Ca(2+): inactivated by GTP, which stabilizes its closed structure, thereby obstructing the accessibility of substrates to the active sites. In contrast, Ca(2+) acts as a cofactor by inducing conformational change to the active open form. In absence of Ca(2+), Mg(2+) may bind Ca(2+)-binding sites, promoting GTP-binding and subsequent inhibition of the acyltransferase activity. Extracellularly reduced and activated by CLIC3. Calcium-dependent acyltransferase that catalyzes the formation of covalent bonds between peptide-bound glutamine and various primary amines, such as gamma-amino group of peptide-bound lysine, or mono- and polyamines, thereby producing cross-linked or aminated proteins, respectively. Involved in many biological processes, such as bone development, angiogenesis, wound healing, cellular differentiation, chromatin modification and apoptosis. Acts as a protein-glutamine gamma-glutamyltransferase by mediating the cross-linking of proteins, such as ACO2, HSPB6, FN1, HMGB1, RAP1GDS1, SLC25A4/ANT1, SPP1 and WDR54. Under physiological conditions, the protein cross-linking activity is inhibited by GTP; inhibition is relieved by Ca(2+) in response to various stresses. When secreted, catalyzes cross-linking of proteins of the extracellular matrix, such as FN1 and SPP1 resulting in the formation of scaffolds. Plays a key role during apoptosis, both by (1) promoting the cross-linking of cytoskeletal proteins resulting in condensation of the cytoplasm, and by (2) mediating cross-linking proteins of the extracellular matrix, resulting in the irreversible formation of scaffolds that stabilize the integrity of the dying cells before their clearance by phagocytosis, thereby preventing the leakage of harmful intracellular components. In addition to protein cross-linking, can use different monoamine substrates to catalyze a vast array of protein post-translational modifications: mediates aminylation of serotonin, dopamine, noradrenaline or histamine into glutamine residues of target proteins to generate protein serotonylation, dopaminylation, noradrenalinylation or histaminylation, respectively. Mediates protein serotonylation of small GTPases during activation and aggregation of platelets, leading to constitutive activation of these GTPases. Plays a key role in chromatin organization by mediating serotonylation and dopaminylation of histone H3. Catalyzes serotonylation of 'Gln-5' of histone H3 (H3Q5ser) during serotonergic neuron differentiation, thereby facilitating transcription. Acts as a mediator of neurotransmission-independent role of nuclear dopamine in ventral tegmental area (VTA) neurons: catalyzes dopaminylation of 'Gln-5' of histone H3 (H3Q5dop), thereby regulating relapse-related transcriptional plasticity in the reward system. Regulates vein remodeling by mediating serotonylation and subsequent inactivation of ATP2A2/SERCA2. Also acts as a protein deamidase by mediating the side chain deamidation of specific glutamine residues of proteins to glutamate. Catalyzes specific deamidation of protein gliadin, a component of wheat gluten in the diet. May also act as an isopeptidase cleaving the previously formed cross-links. Also able to participate in signaling pathways independently of its acyltransferase activity: acts as a signal transducer in alpha-1 adrenergic receptor-mediated stimulation of phospholipase C-delta (PLCD) activity and is required for coupling alpha-1 adrenergic agonists to the stimulation of phosphoinositide lipid metabolism. The protein is Protein-glutamine gamma-glutamyltransferase 2 of Mus musculus (Mouse).